Consider the following 377-residue polypeptide: Alanine racemase (377 aa).

The Proton acceptor; specific for D-alanine role is filled by Lys37. An N6-(pyridoxal phosphate)lysine modification is found at Lys37. Arg135 serves as a coordination point for substrate. Catalysis depends on Tyr271, which acts as the Proton acceptor; specific for L-alanine. Met319 contacts substrate.

The protein belongs to the alanine racemase family. Pyridoxal 5'-phosphate is required as a cofactor.

The catalysed reaction is L-alanine = D-alanine. Its pathway is amino-acid biosynthesis; D-alanine biosynthesis; D-alanine from L-alanine: step 1/1. In terms of biological role, catalyzes the interconversion of L-alanine and D-alanine. May also act on other amino acids. This is Alanine racemase (alr) from Helicobacter pylori (strain Shi470).